A 284-amino-acid chain; its full sequence is Ribosomal RNA small subunit methyltransferase A (284 aa).

S-adenosyl-L-methionine contacts are provided by Asn12, Leu14, Gly38, Glu59, Asp81, and Asn106.

It belongs to the class I-like SAM-binding methyltransferase superfamily. rRNA adenine N(6)-methyltransferase family. RsmA subfamily.

It localises to the cytoplasm. The catalysed reaction is adenosine(1518)/adenosine(1519) in 16S rRNA + 4 S-adenosyl-L-methionine = N(6)-dimethyladenosine(1518)/N(6)-dimethyladenosine(1519) in 16S rRNA + 4 S-adenosyl-L-homocysteine + 4 H(+). In terms of biological role, specifically dimethylates two adjacent adenosines (A1518 and A1519) in the loop of a conserved hairpin near the 3'-end of 16S rRNA in the 30S particle. May play a critical role in biogenesis of 30S subunits. This Phytoplasma australiense protein is Ribosomal RNA small subunit methyltransferase A.